The primary structure comprises 1197 residues: MHIKSIILEGFKSYAQRTEVNGFDPLFNAITGLNGSGKSNILDSICFLLGISNLSQVRASNLQDLVYKNGQAGITKASVSITFDNSDKKQSPLGFEVHDEITVTRQVVIGGRNKYLINGVNANNTRVQDLFCSVGLNVNNPHFLIMQGRITKVLNMKPPEILSMIEEAAGTRMYEYKKIAAQKTIEKKEAKLKEIKTILEEEITPTIQKLKEERSSYLEYQKVMREIEHLSRLYIAYQFLLAEDTKVRSAEELKEMQDKVIKLQEELSENDKKIKALNHEIEELEKRKDKETGGILRSLEDALAEAQRVNTKSQSAFDLKKKNLACEESKRKELEKNMVEDSKTLAAKEKEVKKITDGLHALQEASNKDAEALAAAQQHFNAVSAGLSSNEDGAEATLAGQMMACKNDISKAQTEAKQAQMKLKHAQQELKNKQAEVKKMDSGYRKDQEALEAVKRLKEKLEAEMKKLNYEENKEESLLEKRRQLSRDIGRLKETYEALLARFPNLRFAYKDPEKNWNRNCVKGLVASLISVKDTSATTALELVAGERLYNVVVDTEVTGKKLLERGELKRRYTIIPLNKISARCIAPETLRVAQNLVGPDNVHVALSLVEYKPELQKAMEFVFGTTFVCDNMDNAKKVAFDKRIMTRTVTLGGDVFDPHGTLSGGARSQAASILTKFQELKDVQDELRIKENELRALEEELAGLKNTAEKYRQLKQQWEMKTEEADLLQTKLQQSSYHKQQEELDALKKTIEESEETLKNTKEIQRKAEEKYEVLENKMKNAEAERERELKDAQKKLDCAKTKADASSKKMKEKQQEVEAITLELEELKREHTSYKQQLEAVNEAIKSYESQIEVMAAEVAKNKESVNKAQEEVTKQKEVITAQDTVIKAKYAEVAKHKEQNNDSQLKIKELDHNISKHKREAEDGAAKVSKMLKDYDWINAERHLFGQPNSAYDFKTNNPKEAGQRLQKLQEMKEKLGRNVNMRAMNVLTEAEERYNDLMKKKRIVENDKSKILTTIEDLDQKKNQALNIAWQKVNKDFGSIFSTLLPGANAMLAPPEGQTVLDGLEFKVALGNTWKENLTELSGGQRSLVALSLILSMLLFKPAPIYILDEVDAALDLSHTQNIGQMLRTHFTHSQFIVVSLKEGMFNNANVLFKTKFVDGVSTVARFTQCQNGKISKEAKSKAKPPKGAHVEV.

32 to 39 (GLNGSGKS) is an ATP binding site. N6-acetyllysine occurs at positions 114 and 222. Positions 173–507 (MYEYKKIAAQ…ALLARFPNLR (335 aa)) form a coiled coil. The SMC hinge domain occupies 522 to 640 (VKGLVASLIS…DNMDNAKKVA (119 aa)). Coiled coils occupy residues 672 to 926 (ASIL…EAED) and 963 to 1031 (KEAG…QALN). Residue Lys677 is modified to N6-acetyllysine. N6-acetyllysine is present on residues Lys1158 and Lys1160.

This sequence belongs to the SMC family. SMC2 subfamily. Forms a heterodimer with SMC4. Component of the condensin complex, which contains the SMC2 and SMC4 heterodimer, and three non SMC subunits that probably regulate the complex: BRRN1/CAPH, CNAP1/CAPD2 and CAPG. Interacts with BRD4 (isoform B), leading to insulate chromatin from DNA damage response pathway.

The protein resides in the nucleus. Its subcellular location is the cytoplasm. It is found in the chromosome. Its function is as follows. Central component of the condensin complex, a complex required for conversion of interphase chromatin into mitotic-like condense chromosomes. The condensin complex probably introduces positive supercoils into relaxed DNA in the presence of type I topoisomerases and converts nicked DNA into positive knotted forms in the presence of type II topoisomerases. This chain is Structural maintenance of chromosomes protein 2 (SMC2), found in Homo sapiens (Human).